The primary structure comprises 227 residues: Cytochrome c oxidase subunit 2 (227 aa).

Topologically, residues 1-14 are mitochondrial intermembrane; that stretch reads MAYPAQMGFQDATS. A helical membrane pass occupies residues 15–45; it reads PIMEELLYFHDHTLMIVFMISSLVLYTISLM. Residues 46–59 are Mitochondrial matrix-facing; it reads LTTSLTHTNTMNAQ. A helical membrane pass occupies residues 60–87; it reads EVETVWTILPAIICILIALPSLRILYMM. Residues 88 to 227 lie on the Mitochondrial intermembrane side of the membrane; the sequence is DEINNPSLTI…YFEKWLLTML (140 aa). His-161, Cys-196, Glu-198, Cys-200, His-204, and Met-207 together coordinate Cu cation. Glu-198 contributes to the Mg(2+) binding site. Tyr-218 is modified (phosphotyrosine).

This sequence belongs to the cytochrome c oxidase subunit 2 family. As to quaternary structure, component of the cytochrome c oxidase (complex IV, CIV), a multisubunit enzyme composed of 14 subunits. The complex is composed of a catalytic core of 3 subunits MT-CO1, MT-CO2 and MT-CO3, encoded in the mitochondrial DNA, and 11 supernumerary subunits COX4I, COX5A, COX5B, COX6A, COX6B, COX6C, COX7A, COX7B, COX7C, COX8 and NDUFA4, which are encoded in the nuclear genome. The complex exists as a monomer or a dimer and forms supercomplexes (SCs) in the inner mitochondrial membrane with NADH-ubiquinone oxidoreductase (complex I, CI) and ubiquinol-cytochrome c oxidoreductase (cytochrome b-c1 complex, complex III, CIII), resulting in different assemblies (supercomplex SCI(1)III(2)IV(1) and megacomplex MCI(2)III(2)IV(2)). Found in a complex with TMEM177, COA6, COX18, COX20, SCO1 and SCO2. Interacts with TMEM177 in a COX20-dependent manner. Interacts with COX20. Interacts with COX16. Cu cation is required as a cofactor.

It localises to the mitochondrion inner membrane. It carries out the reaction 4 Fe(II)-[cytochrome c] + O2 + 8 H(+)(in) = 4 Fe(III)-[cytochrome c] + 2 H2O + 4 H(+)(out). Its function is as follows. Component of the cytochrome c oxidase, the last enzyme in the mitochondrial electron transport chain which drives oxidative phosphorylation. The respiratory chain contains 3 multisubunit complexes succinate dehydrogenase (complex II, CII), ubiquinol-cytochrome c oxidoreductase (cytochrome b-c1 complex, complex III, CIII) and cytochrome c oxidase (complex IV, CIV), that cooperate to transfer electrons derived from NADH and succinate to molecular oxygen, creating an electrochemical gradient over the inner membrane that drives transmembrane transport and the ATP synthase. Cytochrome c oxidase is the component of the respiratory chain that catalyzes the reduction of oxygen to water. Electrons originating from reduced cytochrome c in the intermembrane space (IMS) are transferred via the dinuclear copper A center (CU(A)) of subunit 2 and heme A of subunit 1 to the active site in subunit 1, a binuclear center (BNC) formed by heme A3 and copper B (CU(B)). The BNC reduces molecular oxygen to 2 water molecules using 4 electrons from cytochrome c in the IMS and 4 protons from the mitochondrial matrix. This is Cytochrome c oxidase subunit 2 (MT-CO2) from Daubentonia madagascariensis (Aye-aye).